Reading from the N-terminus, the 702-residue chain is MNSLFASTARGLEELLKTELENLGAVECQVVQGGVHFKGDTRLVYQSLMWSRLASRIMLPLGECKVYSDLDLYLGVQAINWTEMFNPGATFAVHFSGLNDTIRNSQYGAMKVKDAIVDAFTRKNLPRPNVDRDAPDIRVNVWLHKETASIALDLSGDGLHLRGYRDRAGIAPIKETLAAAIVMRSGWQPGTPLLDPMCGSGTLLIEAAMLATDRAPGLHRGRWGFSGWAQHDEAIWQEVKAEAQTRARKGLAEYSSHFYGSDSDARVIQRARTNARLAGIGELITFEVKDVAQLTNPLPKEPYGTVLSNPPYGERLDSEPALIALHSLLGRIMKNQFGGWNLSLFSASPDLLSCLQLRADKQYKAKNGPLDCVQKNYHVAESTPDSKPAMVAEDYANRLRKNLKKFEKWARQEGIECYRLYDADLPEYNVAVDRYADWVVVQEYAPPKTIDAHKARQRLFDIIAATISVLGIAPNKLVLKTRERQKGKNQYQKLGEKGEFLEVTEYNAHLWVNLTDYLDTGLFLDHRIARRMLGQMSKGKDFLNLFSYTGSATVHAGLGGARSTTTVDMSRTYLEWAERNLRLNGLTGRAHRLIQADCLAWLREANEQFDLIFIDPPTFSNSKRMEDAFDVQRDHLALMKDLKRLLRAGGTIMFSNNKRGFRMDLDGLAKLGLKAQEITQKTLSQDFARNRQIHNCWLITAA.

The region spanning 43–154 is the THUMP domain; the sequence is LVYQSLMWSR…KETASIALDL (112 aa).

The protein belongs to the methyltransferase superfamily. RlmKL family.

Its subcellular location is the cytoplasm. The catalysed reaction is guanosine(2445) in 23S rRNA + S-adenosyl-L-methionine = N(2)-methylguanosine(2445) in 23S rRNA + S-adenosyl-L-homocysteine + H(+). It carries out the reaction guanosine(2069) in 23S rRNA + S-adenosyl-L-methionine = N(2)-methylguanosine(2069) in 23S rRNA + S-adenosyl-L-homocysteine + H(+). Functionally, specifically methylates the guanine in position 2445 (m2G2445) and the guanine in position 2069 (m7G2069) of 23S rRNA. The polypeptide is Ribosomal RNA large subunit methyltransferase K/L (Escherichia coli O157:H7).